Here is a 411-residue protein sequence, read N- to C-terminus: MSLTLWSGVNPENARTHKLLAAAALANVAVTLKACEYGRENETAEYCRNCSPCGRYPVLQTEEGCVFESNAILRHIARLDRSGGFLYGRTPLEGSQVDMWLDFSATELDAASEPFVHHAFRGEPLPANAMDRVHEVLRALEAWLETRTFLVGERMTVADVAVAFALQWHYRLNGAEGEALTKKYRNAYRMYNTVMQQPKTVEVLRSQGATFGAREGGAKGQGRGCARPGREEAERAAAAADGAEEEDEAPREKKKPNPLDELPPSPFVLDAFKREYSNTDTRTVAAPYFFQHYDAAGYTTFWCRYKYNEDNKMQFMTANLIRGWFQRMEHVRKYAFGVALIIGEERRHDIVALWVFRGRGMPAIVEDVEDTELFDWEEVADVAAQRERITDYLSWEGPTIPRPVLEGRVFK.

The region spanning 3–84 (LTLWSGVNPE…HIARLDRSGG (82 aa)) is the GST N-terminal domain. The 127-residue stretch at 90–216 (TPLEGSQVDM…QGATFGAREG (127 aa)) folds into the GST C-terminal domain. The interval 212 to 265 (GAREGGAKGQGRGCARPGREEAERAAAAADGAEEEDEAPREKKKPNPLDELPPS) is disordered. Gly residues predominate over residues 214–223 (REGGAKGQGR). Residues 255-411 (KPNPLDELPP…RPVLEGRVFK (157 aa)) enclose the EF-1-gamma C-terminal domain.

In terms of assembly, EF-1 is composed of four subunits: alpha, beta, delta, and gamma.

Probably plays a role in anchoring the complex to other cellular components. This Trypanosoma cruzi protein is Elongation factor 1-gamma.